A 195-amino-acid polypeptide reads, in one-letter code: ATP-dependent Clp protease proteolytic subunit (195 aa).

Ser97 acts as the Nucleophile in catalysis. The active site involves His122.

Belongs to the peptidase S14 family. As to quaternary structure, fourteen ClpP subunits assemble into 2 heptameric rings which stack back to back to give a disk-like structure with a central cavity, resembling the structure of eukaryotic proteasomes.

The protein resides in the cytoplasm. It carries out the reaction Hydrolysis of proteins to small peptides in the presence of ATP and magnesium. alpha-casein is the usual test substrate. In the absence of ATP, only oligopeptides shorter than five residues are hydrolyzed (such as succinyl-Leu-Tyr-|-NHMec, and Leu-Tyr-Leu-|-Tyr-Trp, in which cleavage of the -Tyr-|-Leu- and -Tyr-|-Trp bonds also occurs).. Its function is as follows. Cleaves peptides in various proteins in a process that requires ATP hydrolysis. Has a chymotrypsin-like activity. Plays a major role in the degradation of misfolded proteins. The polypeptide is ATP-dependent Clp protease proteolytic subunit (Lactobacillus gasseri (strain ATCC 33323 / DSM 20243 / BCRC 14619 / CIP 102991 / JCM 1131 / KCTC 3163 / NCIMB 11718 / NCTC 13722 / AM63)).